A 485-amino-acid chain; its full sequence is Dual specificity protein phosphatase CDC14B (485 aa).

Positions 1–38 are disordered; that stretch reads MKRKSERRSAWATAPPCSRRSSSSSPGVKKSRSSTPQE. Positions 1–54 match the Nucleolar localization signal motif; the sequence is MKRKSERRSAWATAPPCSRRSSSSSPGVKKSRSSTPQELHRLEQQDDLYLDITD. Residues 15–28 are compositionally biased toward low complexity; the sequence is PPCSRRSSSSSPGV. The segment at 44–198 is a; the sequence is QQDDLYLDIT…AMQYGFFNFN (155 aa). Positions 199-212 are linker; it reads SFNLDEYEHYEKAE. Residues 213–379 form a b region; that stretch reads NGDFNWIIPE…EGDYFRQKLR (167 aa). The Tyrosine-protein phosphatase domain occupies 215–374; it reads DFNWIIPERF…SSLWLEGDYF (160 aa). Cys-314 (phosphocysteine intermediate) is an active-site residue. The segment at 402 to 424 is disordered; it reads LNGLENQDNQEPEPYSDDDEVSG. A compositionally biased stretch (acidic residues) spans 409–422; sequence DNQEPEPYSDDDEV.

This sequence belongs to the protein-tyrosine phosphatase family. Non-receptor class CDC14 subfamily. Interacts with FZR1/CDH1.

It is found in the nucleus. It localises to the nucleolus. The protein localises to the nucleoplasm. The enzyme catalyses O-phospho-L-tyrosyl-[protein] + H2O = L-tyrosyl-[protein] + phosphate. It catalyses the reaction O-phospho-L-seryl-[protein] + H2O = L-seryl-[protein] + phosphate. The catalysed reaction is O-phospho-L-threonyl-[protein] + H2O = L-threonyl-[protein] + phosphate. In terms of biological role, dual-specificity phosphatase involved in DNA damage response. Essential regulator of the G2 DNA damage checkpoint: following DNA damage, translocates to the nucleus and dephosphorylates FZR1/CDH1, a key activator of the anaphase promoting complex/cyclosome (APC/C). Dephosphorylates SIRT2 around early anaphase. Dephosphorylation of FZR1/CDH1 activates the APC/C, leading to the ubiquitination of PLK1, preventing entry into mitosis. Preferentially dephosphorylates proteins modified by proline-directed kinases. The chain is Dual specificity protein phosphatase CDC14B (Cdc14b) from Mus musculus (Mouse).